A 213-amino-acid polypeptide reads, in one-letter code: Histidine biosynthesis bifunctional protein HisIE (213 aa).

A phosphoribosyl-AMP cyclohydrolase region spans residues 1 to 114 (MLTTEKYQGL…FHPALTDFSF (114 aa)). Residues 115-213 (LFQLENIISI…RVRSKLKKKH (99 aa)) are phosphoribosyl-ATP pyrophosphohydrolase.

In the N-terminal section; belongs to the PRA-CH family. It in the C-terminal section; belongs to the PRA-PH family.

The protein localises to the cytoplasm. The enzyme catalyses 1-(5-phospho-beta-D-ribosyl)-ATP + H2O = 1-(5-phospho-beta-D-ribosyl)-5'-AMP + diphosphate + H(+). The catalysed reaction is 1-(5-phospho-beta-D-ribosyl)-5'-AMP + H2O = 1-(5-phospho-beta-D-ribosyl)-5-[(5-phospho-beta-D-ribosylamino)methylideneamino]imidazole-4-carboxamide. Its pathway is amino-acid biosynthesis; L-histidine biosynthesis; L-histidine from 5-phospho-alpha-D-ribose 1-diphosphate: step 2/9. It participates in amino-acid biosynthesis; L-histidine biosynthesis; L-histidine from 5-phospho-alpha-D-ribose 1-diphosphate: step 3/9. In Blochmanniella floridana, this protein is Histidine biosynthesis bifunctional protein HisIE.